The sequence spans 58 residues: Large ribosomal subunit protein uL30 (58 aa).

It belongs to the universal ribosomal protein uL30 family. Part of the 50S ribosomal subunit.

This chain is Large ribosomal subunit protein uL30, found in Porphyromonas gingivalis (strain ATCC 33277 / DSM 20709 / CIP 103683 / JCM 12257 / NCTC 11834 / 2561).